Here is a 570-residue protein sequence, read N- to C-terminus: NADPH oxidase 2 (570 aa).

The Cytoplasmic portion of the chain corresponds to 2 to 9; that stretch reads GNWAVNEG. A helical membrane pass occupies residues 10–36; it reads LSIFVILVWLGLNVFLFINYYKVYDDG. Residues 37 to 46 are Extracellular-facing; that stretch reads PKYNYTRKLL. A glycan (N-linked (GlcNAc...) asparagine) is linked at Asn40. The helical transmembrane segment at 47–72 threads the bilayer; sequence GSALALARAPAACLNFNCMLILLPVC. The Ferric oxidoreductase domain maps to 54-286; it reads RAPAACLNFN…MFLYLCERLV (233 aa). Over 73 to 95 the chain is Cytoplasmic; it reads RNLLSFLRGSSACCSTRIRRQLD. The chain crosses the membrane as a helical span at residues 96–130; the sequence is RNLTFHKMVAWMIALHTAIHTIAHLFNVEWCVNAR. 2 residues coordinate heme b: His101 and His115. Residues 131-163 lie on the Extracellular side of the membrane; sequence VGISDRYSIALSDIGDNENEEYLNFAREKIKNP. Residues Lys159 and Lys161 each participate in a glycyl lysine isopeptide (Lys-Gly) (interchain with G-Cter in ubiquitin) cross-link. A helical membrane pass occupies residues 164–194; it reads EGGLYVAVTRLAGITGIVITLCLILIITSST. The Cytoplasmic portion of the chain corresponds to 195 to 203; that stretch reads KTIRRSYFE. Arg199 and Ser200 together coordinate FAD. Residues 204 to 222 form a helical membrane-spanning segment; it reads VFWYTHHLFVIFFIGLAIH. Trp206, His209, His222, Arg226, and Ile227 together coordinate heme b. The Extracellular segment spans residues 223-267; that stretch reads GAERIVRGQTAESLEEHNLDICADKIEEWGKIKECPVPKFAGNPP. Lys255 is covalently cross-linked (Glycyl lysine isopeptide (Lys-Gly) (interchain with G-Cter in ubiquitin)). 3 residues coordinate heme b: Met268, Tyr280, and Arg287. The chain crosses the membrane as a helical span at residues 268-285; that stretch reads MTWKWIVGPMFLYLCERL. At 286 to 570 the chain is on the cytoplasmic side; sequence VRFWRSQQKV…VHFIFNKENF (285 aa). The FAD-binding FR-type domain maps to 287–397; the sequence is RFWRSQQKVV…DGPFGTASED (111 aa). Residues Lys294, Lys299, Lys306, Lys328, and Lys334 each participate in a glycyl lysine isopeptide (Lys-Gly) (interchain with G-Cter in ubiquitin) cross-link. FAD is bound by residues Trp337, His338, Pro339, Thr341, His354, Arg356, Trp361, and Thr362. A Glycyl lysine isopeptide (Lys-Gly) (interchain with G-Cter in ubiquitin) cross-link involves residue Lys381. NADPH is bound by residues Ile411, Arg446, and Thr481. Lys506 participates in a covalent cross-link: Glycyl lysine isopeptide (Lys-Gly) (interchain with G-Cter in ubiquitin). Arg513 contacts NADPH. Residue Lys567 forms a Glycyl lysine isopeptide (Lys-Gly) (interchain with G-Cter in ubiquitin) linkage.

Component of the phagocyte NADPH oxidase core complex/cytochrome b558 complex, composed of CYBB (heavy chain (beta)) and CYBA (light chain (alpha)). Component of the phagocyte NADPH oxidase complex composed of an obligatory core heterodimer formed by the membrane proteins CYBA and CYBB and the cytosolic regulatory subunits NCF1/p47-phox, NCF2/p67-phox, NCF4/p40-phox and the small GTPase RAC1 or RAC2. Interacts with NCF1 (phosphorylated form). Interacts with NCF2; the interaction is enhanced in the presence of GBP7. Interacts with RAC2. Interacts with RAC1. Interacts with calprotectin (S100A8/9). Interacts with NRROS; the interaction is direct and impairs formation of a stable NADPH oxidase complex. Interacts with CYBC1; CYBC1 may act as a chaperone stabilizing Cytochrome b-245 heterodimer. The CYBA:CYBB complex interacts with GBP7. FAD serves as cofactor. Post-translationally, glycosylated. Phosphorylated on Ser and Thr residues by PKC during neutrophils activation. Phosphorylation enhances the NADPH oxidase activity and stimulates its interaction with RAC2, NCF2/p67-phox, and NCF1/p47-phox. In terms of processing, undergoes 'Lys-48'-linked polyubiquitination, likely by RNF145, triggering endoplasmic reticulum-associated degradation.

It is found in the cell membrane. It carries out the reaction NADPH + 2 O2 = 2 superoxide + NADP(+) + H(+). Its function is as follows. Catalytic subunit of the phagocyte NADPH oxidase complex that mediates the transfer of electrons from cytosolic NADPH to O2 to produce the superoxide anion (O2(-)). In the activated complex, electrons are first transferred from NADPH to flavin adenine dinucleotide (FAD) and subsequently transferred via two heme molecules to molecular oxygen, producing superoxide through an outer-sphere reaction. Activation of the NADPH oxidase complex is initiated by the assembly of cytosolic subunits of the NADPH oxidase complex with the core NADPH oxidase complex to form a complex at the plasma membrane or phagosomal membrane. This activation process is initiated by phosphorylation dependent binding of the cytosolic NCF1/p47-phox subunit to the C-terminus of CYBA/p22-phox. NADPH oxidase complex assembly is impaired through interaction with NRROS. This chain is NADPH oxidase 2, found in Mus musculus (Mouse).